Reading from the N-terminus, the 868-residue chain is B-cell receptor CD22 (868 aa).

The signal sequence occupies residues 1-21 (MRVHYLWLLLILGHVASARYS). The 127-residue stretch at 22 to 148 (SANDWTVDHP…MEPIHLNVSE (127 aa)) folds into the Ig-like V-type domain. Topologically, residues 22–708 (SANDWTVDHP…YYSPETIGKR (687 aa)) are extracellular. 3 disulfide bridges follow: cysteine 41–cysteine 177, cysteine 46–cysteine 112, and cysteine 171–cysteine 235. 2 N-linked (GlcNAc...) asparagine glycosylation sites follow: asparagine 111 and asparagine 122. N-acetylneuraminate is bound at residue arginine 130. Residues asparagine 145, asparagine 174, asparagine 271, asparagine 281, asparagine 384, asparagine 414, asparagine 466, asparagine 567, and asparagine 595 are each glycosylated (N-linked (GlcNAc...) asparagine). 6 Ig-like C2-type domains span residues 153–250 (PYIQ…RTVR), 257–347 (PKLE…VELT), 352–435 (PEPS…AKLD), 440–521 (PKAV…VILN), 526–603 (PRDV…ETLS), and 614–697 (PRRL…STLT). Intrachain disulfides connect cysteine 278/cysteine 330, cysteine 374/cysteine 417, cysteine 463/cysteine 505, and cysteine 550/cysteine 592. Cysteines 637 and 680 form a disulfide. Residues 709-727 (VALGLGFCLTICILAIWGM) traverse the membrane as a helical segment. Over 728–868 (KIQKKWKQNR…EDVDYVTLKH (141 aa)) the chain is Cytoplasmic. Over residues 738-752 (SQQGLQENSSGQSFF) the composition is skewed to polar residues. A disordered region spans residues 738 to 772 (SQQGLQENSSGQSFFVRNKKARRTPLSEGPQSQGC). Serine 746, serine 747, and serine 750 each carry phosphoserine. Positions 781-786 (VSYAIL) match the ITIM motif 1 motif. Phosphotyrosine is present on tyrosine 783. Residues 790 to 812 (ESDTHNTGDAGTPATQAPPPNNS) are disordered. 3 positions are modified to phosphotyrosine: tyrosine 828, tyrosine 843, and tyrosine 863. Short sequence motifs (ITIM motif) lie at residues 841-846 (IHYSEL) and 861-866 (VDYVTL).

This sequence belongs to the immunoglobulin superfamily. SIGLEC (sialic acid binding Ig-like lectin) family. Predominantly monomer of isoform CD22-beta. Also found as heterodimer of isoform CD22-beta and a shorter isoform. Interacts with PTPN6/SHP-1, LYN, SYK, PIK3R1/PIK3R2 and PLCG1 upon phosphorylation. Interacts with GRB2, INPP5D and SHC1 upon phosphorylation. May form a complex with INPP5D/SHIP, GRB2 and SHC1. Phosphorylated on tyrosine residues by LYN. In terms of processing, phosphorylation of Tyr-783 and Tyr-843 are involved in binding to SYK. Phosphorylation of Tyr-828 is involved in binding to GRB2. Phosphorylation of Tyr-863 is involved in binding to SYK, PLCG2 and PIK3R1/PIK3R2. In terms of tissue distribution, B-lymphocytes.

Its subcellular location is the cell membrane. Most highly expressed siglec (sialic acid-binding immunoglobulin-like lectin) on B-cells that plays a role in various aspects of B-cell biology including differentiation, antigen presentation, and trafficking to bone marrow. Binds to alpha 2,6-linked sialic acid residues of surface molecules such as CD22 itself, CD45 and IgM in a cis configuration. Can also bind to ligands on other cells as an adhesion molecule in a trans configuration. Acts as an inhibitory coreceptor on the surface of B-cells and inhibits B-cell receptor induced signaling, characterized by inhibition of the calcium mobilization and cellular activation. Mechanistically, the immunoreceptor tyrosine-based inhibitory motif domain is phosphorylated by the Src kinase LYN, which in turn leads to the recruitment of the protein tyrosine phosphatase 1/PTPN6, leading to the negative regulation of BCR signaling. If this negative signaling from is of sufficient strength, apoptosis of the B-cell can be induced. This chain is B-cell receptor CD22, found in Mus musculus (Mouse).